Reading from the N-terminus, the 441-residue chain is 4-alpha-glucanotransferase (441 aa).

Ca(2+) contacts are provided by Asp-13, Asn-15, Asp-17, Val-19, and Asp-21. The Nucleophile role is filled by Asp-186. Glu-216 serves as the catalytic Proton donor.

This sequence belongs to the glycosyl hydrolase 13 family. Monomer. The cofactor is Ca(2+).

Its subcellular location is the cytoplasm. It carries out the reaction Transfers a segment of a (1-&gt;4)-alpha-D-glucan to a new position in an acceptor, which may be glucose or a (1-&gt;4)-alpha-D-glucan.. The chain is 4-alpha-glucanotransferase (mgtA) from Thermotoga maritima (strain ATCC 43589 / DSM 3109 / JCM 10099 / NBRC 100826 / MSB8).